The following is a 434-amino-acid chain: ATP-dependent protease ATPase subunit HslU (434 aa).

ATP contacts are provided by residues Ile18, 60–65 (GVGKTE), Asp247, Glu312, and Arg384.

The protein belongs to the ClpX chaperone family. HslU subfamily. A double ring-shaped homohexamer of HslV is capped on each side by a ring-shaped HslU homohexamer. The assembly of the HslU/HslV complex is dependent on binding of ATP.

It is found in the cytoplasm. Functionally, ATPase subunit of a proteasome-like degradation complex; this subunit has chaperone activity. The binding of ATP and its subsequent hydrolysis by HslU are essential for unfolding of protein substrates subsequently hydrolyzed by HslV. HslU recognizes the N-terminal part of its protein substrates and unfolds these before they are guided to HslV for hydrolysis. The sequence is that of ATP-dependent protease ATPase subunit HslU from Brucella abortus (strain S19).